Reading from the N-terminus, the 137-residue chain is ATP synthase epsilon chain (137 aa).

The protein belongs to the ATPase epsilon chain family. In terms of assembly, F-type ATPases have 2 components, CF(1) - the catalytic core - and CF(0) - the membrane proton channel. CF(1) has five subunits: alpha(3), beta(3), gamma(1), delta(1), epsilon(1). CF(0) has three main subunits: a, b and c.

It is found in the cell membrane. Produces ATP from ADP in the presence of a proton gradient across the membrane. The polypeptide is ATP synthase epsilon chain (Thermobifida fusca (strain YX)).